A 464-amino-acid chain; its full sequence is MSTDKTNQSWGGRFSEPVDAFVARFTASVDFDKRLYRHDIMGSIAHATMLAQVGVLSDAERDTIIDGLNTIQGEIEAGNFDWRVDLEDVHMNIEARLTDRIGITGKKLHTGRSRNDQVATDIRLWLRDEIDLILAEITRLQQGLLEQAEREAQTIMPGFTHLQTAQPVTFGHHLLAWFEMLSRDYERLVDCRKRTNRMPLGSAALAGTTYPIDRELTCKLLGFEAVAGNSLDGVSDRDFAIEFCAAASVAMMHLSRFSEELVLWTSAQFQFVDLPDRFCTGSSIMPQKKNPDVPELVRGKSGRVFGALTGLLTLMKGQPLAYNKDNQEDKEPLFDAADTLRDSLRAFADMIPAIKPRHAIMREAALRGFSTATDLADYLVRRGLPFRDCHEIVGHAVKYGVDTGKDLAEMSLDELRQFSDQIEQDVFAVLTLEGSVNARDHIGGTAPAQVLAAVVRGKALLASR.

The protein belongs to the lyase 1 family. Argininosuccinate lyase subfamily.

Its subcellular location is the cytoplasm. It catalyses the reaction 2-(N(omega)-L-arginino)succinate = fumarate + L-arginine. It participates in amino-acid biosynthesis; L-arginine biosynthesis; L-arginine from L-ornithine and carbamoyl phosphate: step 3/3. The polypeptide is Argininosuccinate lyase (Pseudomonas putida (strain W619)).